The primary structure comprises 333 residues: Ribosomal RNA small subunit methyltransferase C (333 aa).

This sequence belongs to the methyltransferase superfamily. RsmC family. In terms of assembly, monomer.

The protein localises to the cytoplasm. The catalysed reaction is guanosine(1207) in 16S rRNA + S-adenosyl-L-methionine = N(2)-methylguanosine(1207) in 16S rRNA + S-adenosyl-L-homocysteine + H(+). Functionally, specifically methylates the guanine in position 1207 of 16S rRNA in the 30S particle. The chain is Ribosomal RNA small subunit methyltransferase C from Chromohalobacter salexigens (strain ATCC BAA-138 / DSM 3043 / CIP 106854 / NCIMB 13768 / 1H11).